Here is a 104-residue protein sequence, read N- to C-terminus: PTS system lactose-specific EIIA component (104 aa).

Positions 1-102 (MNRDEVQLLG…MKHLIELYKK (102 aa)) constitute a PTS EIIA type-3 domain. His78 serves as the catalytic Tele-phosphohistidine intermediate. His78 carries the phosphohistidine; by HPr modification. Asp81 contacts Mg(2+).

As to quaternary structure, homotrimer. Mg(2+) is required as a cofactor.

The protein resides in the cytoplasm. Functionally, the phosphoenolpyruvate-dependent sugar phosphotransferase system (sugar PTS), a major carbohydrate active transport system, catalyzes the phosphorylation of incoming sugar substrates concomitantly with their translocation across the cell membrane. The enzyme II LacEF PTS system is involved in lactose transport. The chain is PTS system lactose-specific EIIA component from Staphylococcus epidermidis (strain ATCC 35984 / DSM 28319 / BCRC 17069 / CCUG 31568 / BM 3577 / RP62A).